The chain runs to 1363 residues: Insulin-like peptide receptor (1363 aa).

A signal peptide spans 1 to 29; it reads MRVVDKMAGLMWAALTLVIGLGLLVPSNG. Residues N51, N97, N137, N278, N483, N599, N617, N665, N666, N711, N732, N736, N743, N816, N885, and N898 are each glycosylated (N-linked (GlcNAc...) asparagine). 2 consecutive Fibronectin type-III domains span residues 473-586 and 590-680; these read SFSR…TDAD and HPQD…CPKS. 2 consecutive Fibronectin type-III domains span residues 712–804 and 813–912; these read ETRA…LART and IPGN…VEEE. The Extracellular segment spans residues 721–928; sequence ELPVTARPFY…QDPQQQVPVS (208 aa). Positions 739–759 are disordered; that stretch reads LPSTNRTVPPTPTPNPNPQLE. Residues 929-949 traverse the membrane as a helical segment; that stretch reads LMIGMGVGFSLLLILAVIFGI. At 950-1363 the chain is on the cytoplasmic side; the sequence is WYCTKKRFGD…NLRIPKSTLC (414 aa). The 290-residue stretch at 994 to 1283 folds into the Protein kinase domain; it reads ITLIRELGQG…EIVEILSPEL (290 aa). ATP-binding positions include 1000–1008 and K1028; that span reads LGQGSFGMV. A disordered region spans residues 1091 to 1117; that stretch reads PEEDVGLSDSPASNEAKNSPFAENDND. D1148 (proton acceptor) is an active-site residue. Y1174 is subject to Phosphotyrosine; by autocatalysis. Residues 1316–1363 form a disordered region; the sequence is DTETEMYPSGSEFSSTPSPPSETPYSHMNGSHPQNGSMNLRIPKSTLC. Over residues 1322 to 1331 the composition is skewed to low complexity; sequence YPSGSEFSST. Residues 1343 to 1353 are compositionally biased toward polar residues; that stretch reads MNGSHPQNGSM.

Belongs to the protein kinase superfamily. Tyr protein kinase family. Insulin receptor subfamily. In terms of assembly, probable tetramer of 2 alpha and 2 beta chains linked by disulfide bonds. The alpha chains contribute to the formation of the ligand-binding domain, while the beta chains carry the kinase domain. It depends on Mn(2+) as a cofactor.

It is found in the membrane. The enzyme catalyses L-tyrosyl-[protein] + ATP = O-phospho-L-tyrosyl-[protein] + ADP + H(+). In terms of biological role, this receptor binds to the insulin related peptide and has a tyrosine-protein kinase activity. In Branchiostoma lanceolatum (Common lancelet), this protein is Insulin-like peptide receptor.